The primary structure comprises 245 residues: tRNA pseudouridine synthase A (245 aa).

D52 acts as the Nucleophile in catalysis. A substrate-binding site is contributed by Y111.

This sequence belongs to the tRNA pseudouridine synthase TruA family. As to quaternary structure, homodimer.

The enzyme catalyses uridine(38/39/40) in tRNA = pseudouridine(38/39/40) in tRNA. In terms of biological role, formation of pseudouridine at positions 38, 39 and 40 in the anticodon stem and loop of transfer RNAs. The polypeptide is tRNA pseudouridine synthase A (Wolbachia sp. subsp. Drosophila simulans (strain wRi)).